We begin with the raw amino-acid sequence, 292 residues long: MTITQLKVFVKIAETGSFTKAGQALNMTQPAVSHAISAIEAELDVKLIIRDRRNGLMLTDTGKQILVHIREVLKGIEKVEQVAAAEKGLELGTIHIGTFSTASAYFMPKLISEFKQKYPKLELVLHEGTVNEVKEWLHTRMIDVGILLYPTEEMEYIHLKKDKMAVVLRDDHPLASHSAITLKDLDHEPMIVCDGGYESPFIDMFRQAGATLHPAFTVYNINTSISMIREGLGLAILSEMSMSGMPLPEHVVTRELDPQVYRDVQLAVPSLKEASLAAKLFIEMAKELFGAE.

One can recognise an HTH lysR-type domain in the interval 1–59; the sequence is MTITQLKVFVKIAETGSFTKAGQALNMTQPAVSHAISAIEAELDVKLIIRDRRNGLMLT. A DNA-binding region (H-T-H motif) is located at residues 18–37; it reads FTKAGQALNMTQPAVSHAIS.

It belongs to the LysR transcriptional regulatory family.

This is an uncharacterized protein from Bacillus subtilis (strain 168).